The sequence spans 149 residues: 3-dehydroquinate dehydratase (149 aa).

Tyr22 functions as the Proton acceptor in the catalytic mechanism. Substrate is bound by residues Asn74, His80, and Asp87. Residue His100 is the Proton donor of the active site. Substrate is bound by residues 101–102 and Arg111; that span reads LS.

This sequence belongs to the type-II 3-dehydroquinase family. In terms of assembly, homododecamer.

The catalysed reaction is 3-dehydroquinate = 3-dehydroshikimate + H2O. It participates in metabolic intermediate biosynthesis; chorismate biosynthesis; chorismate from D-erythrose 4-phosphate and phosphoenolpyruvate: step 3/7. Catalyzes a trans-dehydration via an enolate intermediate. In Vesicomyosocius okutanii subsp. Calyptogena okutanii (strain HA), this protein is 3-dehydroquinate dehydratase.